Reading from the N-terminus, the 466-residue chain is GTPase Der (466 aa).

2 consecutive EngA-type G domains span residues 3–166 and 177–350; these read PVIA…PEIP and IKIA…QSAT. Residues 9 to 16, 56 to 60, 118 to 121, 183 to 190, 230 to 234, and 295 to 298 each bind GTP; these read GRPNVGKS, DTGGI, NKID, DTAGV, and NKWD. In terms of domain architecture, KH-like spans 351–435; it reads DRFSTNYLTR…PIRIEFRTTD (85 aa). Residues 442–466 are disordered; the sequence is KKSMTRQQFIQKRRKEERDRNNPRR. The segment covering 455 to 466 has biased composition (basic and acidic residues); it reads RKEERDRNNPRR.

It belongs to the TRAFAC class TrmE-Era-EngA-EngB-Septin-like GTPase superfamily. EngA (Der) GTPase family. In terms of assembly, associates with the 50S ribosomal subunit.

Functionally, GTPase that plays an essential role in the late steps of ribosome biogenesis. The polypeptide is GTPase Der (Cellvibrio japonicus (strain Ueda107) (Pseudomonas fluorescens subsp. cellulosa)).